The sequence spans 282 residues: Mitochondrial outer membrane protein porin (282 aa).

Belongs to the eukaryotic mitochondrial porin family.

It localises to the mitochondrion outer membrane. In terms of biological role, forms a channel through the cell membrane that allows diffusion of small hydrophilic molecules. The channel adopts an open conformation at low or zero membrane potential and a closed conformation at potentials above 30-40 mV. The open state has a weak anion selectivity whereas the closed state is cation-selective. This Candida albicans (strain SC5314 / ATCC MYA-2876) (Yeast) protein is Mitochondrial outer membrane protein porin (POR1).